The sequence spans 832 residues: WD repeat-containing protein 75 (832 aa).

WD repeat units follow at residues 4-43 (KTDIRVVRCGGSKINFRPPIISHDSRFVLCVSGDSVKVYS), 47-86 (EEWLHNLQGHNNQVTGIAFNPANQLQVYSCSADGTVKLWD), 90-134 (GILI…QLVA), 148-187 (KELSTVASKISPNPSCTAFGRGGEFIAFSRHLQLNVYFFR), 196-233 (LKATDKKAGKNAFTCVACHPTDDCIASGHEDGKIRLWR), 239-278 (KEYTYSTKHWHHDAVNHLCFTPEGSNLLSGGIESVLVQWQ), 281-320 (DMSKKEFLPRLGGSISHVSASADGQLFCTAHSDNKISIIE), 326-364 (SGLIQGLVRGDAVSTDLMIDPRSKALVLNGKPGHLQFYS), 378-425 (QQEY…KLWA), 432-474 (SFVL…KAWC), 485-523 (YWSCDFVGSYHNLKPKNCCFSADGSILAVSFQEVLTLWS), 527-567 (WELL…CCWN), and 572-609 (ALEWSTSVDVSRLQSDPLSENVAAFSFESKHTHLFVFK). 2 disordered regions span residues 704 to 723 (QHKLNTETQEPADKPQHTQG) and 759 to 811 (VREE…AQER). Acidic residues predominate over residues 764–785 (DSSEQEMDSEKEEEESEEEMEA). The span at 799 to 811 (DEQKPKLSKAQER) shows a compositional bias: basic and acidic residues.

As to quaternary structure, component of the proposed t-UTP subcomplex of the ribosomal small subunit (SSU) processome. SSU processome is composed of more than 70 proteins and the RNA chaperone small nucleolar RNA (snoRNA) U3.

The protein localises to the nucleus. It is found in the nucleolus. Ribosome biogenesis factor. Part of the small subunit (SSU) processome, first precursor of the small eukaryotic ribosomal subunit. During the assembly of the SSU processome in the nucleolus, many ribosome biogenesis factors, an RNA chaperone and ribosomal proteins associate with the nascent pre-rRNA and work in concert to generate RNA folding, modifications, rearrangements and cleavage as well as targeted degradation of pre-ribosomal RNA by the RNA exosome. Involved in nucleolar processing of pre-18S ribosomal RNA. Required for optimal pre-ribosomal RNA transcription by RNA polymerase I. This is WD repeat-containing protein 75 (wdr75) from Danio rerio (Zebrafish).